The following is a 368-amino-acid chain: 2-oxoglutarate-dependent dioxygenase frbJ (368 aa).

A Fe2OG dioxygenase domain is found at 171-277; that stretch reads QQHKLKIVKY…RYSIPFFQGV (107 aa). Fe cation is bound by residues His-198, Asp-200, and His-256. Position 268 (Arg-268) interacts with 2-oxoglutarate.

Belongs to the iron/ascorbate-dependent oxidoreductase family.

It participates in antifungal biosynthesis. Functionally, 2-oxoglutarate-dependent dioxygenase; part of the gene cluster that mediates the biosynthesis of the antifungal antibiotic FR901469, an inhibitor of beta-1,3-glucansynthase, exerting antifungal activity against the pathogenes Candida albicans and Aspergillus fumigatus. FR901469 is a cyclic depsipeptide containing 12 amino acid residues and a fatty acid chain. The NRPS frbI contains 12 modules responsible for the formation of the depsipeptide backbone which is denoted as Acyl-Thr-Ala-Tyr-Val-4OHPro-Thr-Thr-3OHPro-threo3OHGln-Gly-Thr-Orn-OH (C71H116N14O23). The PKS frbB is probably involved in the production of the hydrocarbon chain, and the acyl-CoA ligase frbC might be involved in the transport of the chain to the peptide ptoduct of frbI. Because FR901469 contains 3 hydroxylated amino acid residues, the 3 oxygenases frbA, frbH, and frbJ might be participating in amino acid hydroxylation. As no thioesterase domains were detected in frbI or frbB, the thioesterases frbD and frbE may instead release and cyclize the products of the NRPS and PKS, respectively. The chain is 2-oxoglutarate-dependent dioxygenase frbJ from Dothideomycetidae sp. (strain 11243) (Fungal sp. (strain No.11243)).